The chain runs to 118 residues: Putative pterin-4-alpha-carbinolamine dehydratase (118 aa).

This sequence belongs to the pterin-4-alpha-carbinolamine dehydratase family.

It catalyses the reaction (4aS,6R)-4a-hydroxy-L-erythro-5,6,7,8-tetrahydrobiopterin = (6R)-L-erythro-6,7-dihydrobiopterin + H2O. The chain is Putative pterin-4-alpha-carbinolamine dehydratase from Pseudomonas entomophila (strain L48).